A 212-amino-acid polypeptide reads, in one-letter code: 3-demethoxyubiquinol 3-hydroxylase (212 aa).

Residues 21-42 form a disordered region; that stretch reads SRMSRPLPVPQESAVTEAAPEL. Fe cation contacts are provided by Glu-61, Glu-91, His-94, Glu-143, Glu-175, and His-178.

Belongs to the COQ7 family. The cofactor is Fe cation.

The protein resides in the cell membrane. The enzyme catalyses a 5-methoxy-2-methyl-3-(all-trans-polyprenyl)benzene-1,4-diol + AH2 + O2 = a 3-demethylubiquinol + A + H2O. It functions in the pathway cofactor biosynthesis; ubiquinone biosynthesis. Its function is as follows. Catalyzes the hydroxylation of 2-nonaprenyl-3-methyl-6-methoxy-1,4-benzoquinol during ubiquinone biosynthesis. The protein is 3-demethoxyubiquinol 3-hydroxylase of Paraburkholderia xenovorans (strain LB400).